The primary structure comprises 382 residues: Tuliposide A-converting enzyme 2, chloroplastic (382 aa).

A chloroplast-targeting transit peptide spans 1–74 (MSVASFFSSL…PSPSLSPTPT (74 aa)). S232 functions as the Acyl-ester intermediate in the catalytic mechanism. Active-site charge relay system residues include D324 and H356.

This sequence belongs to the AB hydrolase superfamily. As to quaternary structure, homodimer. Expressed in roots, stems, leaves, petals, stamens and pistils, but not in bulb scales.

It is found in the plastid. The protein resides in the chloroplast. It carries out the reaction 6-tuliposide A = tulipalin A + D-glucose. With respect to regulation, inhibited by NaF, AgNO(3), HgCl(2), CuSO(4) and phenylmethylsulfonyl fluoride (PMSF). Its function is as follows. Lactone-forming carboxylesterases, specifically catalyzing intramolecular transesterification, but not hydrolysis. Involved in the biosynthesis of tulipalins, defensive chemicals that show antimicrobial activities against a broad range of strains of bacteria and fungi. Substrates are 6-tuliposide A &gt; 6-tuliposide B. This Tulipa gesneriana (Garden tulip) protein is Tuliposide A-converting enzyme 2, chloroplastic (TCEA2).